A 1945-amino-acid chain; its full sequence is Rho GTPase-activating protein 21 (1945 aa).

The interval 26–53 (CEVSKNKDGKDQGEPVSPSEDEPFSWPG) is disordered. Residues 29–38 (SKNKDGKDQG) show a composition bias toward basic and acidic residues. 2 positions are modified to phosphoserine: Ser42 and Ser63. The PDZ domain maps to 56–165 (TVMLKRTSQG…TLELSVMPKD (110 aa)). 2 disordered regions span residues 210 to 229 (TAQP…QQTS) and 326 to 365 (HQTT…DSPP). Residues 347–358 (SGHSEGISSSRS) show a composition bias toward low complexity. Ser454 bears the Phosphoserine mark. Residues 499–512 (EATATVNSESQIPD) are compositionally biased toward polar residues. Residues 499 to 519 (EATATVNSESQIPDSNGERKQ) form a disordered region. Arg549 and Arg569 each carry omega-N-methylarginine. Disordered stretches follow at residues 573-647 (PVSQ…RPVN) and 674-702 (EVSS…LELP). The span at 589–600 (SNRNFPTTTGVS) shows a compositional bias: polar residues. Phosphoserine occurs at positions 610 and 619. Residues 674-696 (EVSSCLPGTSAKTSPQLSENLGT) are compositionally biased toward polar residues. Position 741 is a phosphothreonine (Thr741). Phosphoserine occurs at positions 851, 856, and 875. Disordered regions lie at residues 852–879 (HDQE…YDEG) and 902–921 (ITDS…SSSE). The span at 866-879 (HSSKTERSKSYDEG) shows a compositional bias: basic and acidic residues. Tyr876 carries the post-translational modification Phosphotyrosine. Phosphoserine occurs at positions 918, 920, 948, 1093, and 1109. The segment at 924 to 1091 (SDAAREGWLQ…AKSEPKTQSP (168 aa)) is interaction with ARF1 and ARF6. In terms of domain architecture, PH spans 925 to 1034 (DAAREGWLQF…WIKTIQESSN (110 aa)). The segment at 1080 to 1120 (LGAKSEPKTQSPHSPKEESERKLLSKDDTSPPKDKGTWRRG) is disordered. Residues 1093 to 1116 (SPKEESERKLLSKDDTSPPKDKGT) are compositionally biased toward basic and acidic residues. In terms of domain architecture, Rho-GAP spans 1141-1333 (VRLDDCPPAH…TLIQHHDWFF (193 aa)). Disordered regions lie at residues 1373-1396 (PGDV…SGKD), 1412-1632 (SRKR…PVFP), 1649-1794 (ARVS…LGGH), and 1846-1945 (RTSA…ETPP). A compositionally biased stretch (low complexity) spans 1377 to 1395 (SDSATSDSAKSKGSWGSGK). Residues Ser1412, Ser1426, and Ser1427 each carry the phosphoserine modification. Basic and acidic residues-rich tracts occupy residues 1435–1457 (FFKK…RESE) and 1471–1488 (SNTK…KIPW). A Glycyl lysine isopeptide (Lys-Gly) (interchain with G-Cter in SUMO) cross-link involves residue Lys1438. Residue Thr1504 is modified to Phosphothreonine. 2 stretches are compositionally biased toward low complexity: residues 1531–1556 (SDSG…STSP) and 1569–1589 (TTTS…LDSS). The interaction with CTNNA1 stretch occupies residues 1579–1848 (STTYLTSLDS…WLARERVRTS (270 aa)). The segment covering 1590–1599 (RLSPEVQSVA) has biased composition (polar residues). Basic and acidic residues predominate over residues 1611–1621 (SELVSEGRPVE). Ser1656 is modified (phosphoserine). Composition is skewed to polar residues over residues 1658–1681 (GSEA…QFSS) and 1729–1738 (STGSLLTPSR). Thr1669 carries the post-translational modification Phosphothreonine. Ser1729 bears the Phosphoserine mark. The span at 1739 to 1757 (SESEKQEATWKTKIADRLK) shows a compositional bias: basic and acidic residues. Residues 1782-1792 (RKNIKRRHTLG) show a composition bias toward basic residues. The span at 1871-1882 (PISTHSPPSQQP) shows a compositional bias: polar residues. Over residues 1887-1896 (AATSTLASTS) the composition is skewed to low complexity. Thr1902 carries the post-translational modification Phosphothreonine. Ser1906 carries the phosphoserine modification. Residues 1907 to 1927 (PDQINRESFQNMSQNASSTAN) are compositionally biased toward polar residues. The span at 1932-1945 (KQSESPDTKAETPP) shows a compositional bias: basic and acidic residues.

Interacts with CTNNA1. Interacts with GTP-bound ARF1 and probably ARF6. In terms of processing, sumoylated with SUMO2 and SUMO3 in proliferating lymphocytes.

The protein localises to the golgi apparatus membrane. Its subcellular location is the cell junction. The protein resides in the cytoplasmic vesicle membrane. It localises to the cytoplasm. It is found in the cytoskeleton. In terms of biological role, functions as a GTPase-activating protein (GAP) for RHOA and CDC42. Downstream partner of ARF1 which may control Golgi apparatus structure and function. Also required for CTNNA1 recruitment to adherens junctions. This chain is Rho GTPase-activating protein 21, found in Mus musculus (Mouse).